The primary structure comprises 384 residues: Putative 8-amino-7-oxononanoate synthase (384 aa).

Residue Arg22 participates in substrate binding. Gly109 to Tyr110 contributes to the pyridoxal 5'-phosphate binding site. His134 is a substrate binding site. Pyridoxal 5'-phosphate is bound by residues Ser182, Asp207–His210, and Thr236–Lys239. Lys239 is modified (N6-(pyridoxal phosphate)lysine). Thr348 is a binding site for substrate.

Belongs to the class-II pyridoxal-phosphate-dependent aminotransferase family. BioF subfamily. In terms of assembly, homodimer. Pyridoxal 5'-phosphate is required as a cofactor.

It carries out the reaction 6-carboxyhexanoyl-[ACP] + L-alanine + H(+) = (8S)-8-amino-7-oxononanoate + holo-[ACP] + CO2. The protein operates within cofactor biosynthesis; biotin biosynthesis. Functionally, catalyzes the decarboxylative condensation of pimeloyl-[acyl-carrier protein] and L-alanine to produce 8-amino-7-oxononanoate (AON), [acyl-carrier protein], and carbon dioxide. The chain is Putative 8-amino-7-oxononanoate synthase (bioF) from Caulobacter vibrioides (strain ATCC 19089 / CIP 103742 / CB 15) (Caulobacter crescentus).